Reading from the N-terminus, the 182-residue chain is Tropomyosin-like protein (182 aa).

Residues 1–68 adopt a coiled-coil conformation; sequence FDRYNQILDE…ELEQRRTEQQ (68 aa). Positions 32–66 are enriched in basic and acidic residues; it reads DEETKKIKQEEAEMKKKIEGEASRKKLELEQRRTE. Disordered regions lie at residues 32 to 81 and 140 to 160; these read DEET…GSTD and DQPA…DAGL. The span at 140–153 shows a compositional bias: low complexity; it reads DQPAQAGPEPAAPA.

It is found in the cytoplasm. Its subcellular location is the cytoskeleton. The protein is Tropomyosin-like protein of Pichia angusta (Yeast).